Consider the following 882-residue polypeptide: Envelope glycoprotein gp160 (882 aa).

The N-terminal stretch at 1-22 (MGCLGNQLLIAILLLSVYGIYC) is a signal peptide. Residues 23–697 (IQYVTVFYGV…TSWIKYIQYG (675 aa)) are Extracellular-facing. A glycan (N-linked (GlcNAc...) asparagine; by host) is linked at asparagine 37. Cysteine 44 and cysteine 57 form a disulfide bridge. 19 N-linked (GlcNAc...) asparagine; by host glycosylation sites follow: asparagine 70, asparagine 114, asparagine 149, asparagine 159, asparagine 174, asparagine 187, asparagine 201, asparagine 205, asparagine 215, asparagine 247, asparagine 250, asparagine 257, asparagine 281, asparagine 287, asparagine 298, asparagine 309, asparagine 319, asparagine 374, and asparagine 380. 5 disulfides stabilise this stretch: cysteine 101-cysteine 223, cysteine 108-cysteine 214, cysteine 113-cysteine 171, cysteine 236-cysteine 266, and cysteine 246-cysteine 258. Positions 113 to 170 (CNKSETDKWGLTKSSTTTASTTTTTTAKSVETRDIVNETSPCVVHDNCTGLEQEPMIS) are V1. A V2 region spans residues 171-214 (CKFNMTGLKRDKKKEYNETWYSADLVCEQGNSTGNESRCYMNHC). A V3 region spans residues 314–346 (CRRPGNKTVLPVTIMSALVFHSQPVNERPKQAW). Cysteine 314 and cysteine 347 are oxidised to a cystine. 2 disulfides stabilise this stretch: cysteine 398–cysteine 462 and cysteine 405–cysteine 435. Residues 405–435 (CKMNWFLNWVEDRSLTTQKPKERHKRNYVPC) form a V4 region. Asparagine 463, asparagine 474, and asparagine 479 each carry an N-linked (GlcNAc...) asparagine; by host glycan. The tract at residues 478-485 (GNQTSITM) is V5. The interval 529–549 (GVFVLGFLGFLATAGSAMGAA) is fusion peptide. The segment at 592–608 (LQTRVSAIEKYLKDQAQ) is immunosuppression. 3 N-linked (GlcNAc...) asparagine; by host glycosylation sites follow: asparagine 628, asparagine 637, and asparagine 653. Residues 637 to 669 (NETWQEWERKVDFLEANITALLEEAQIQQEKNM) are a coiled coil. The MPER; binding to GalCer stretch occupies residues 674-695 (KLNSWDVFGNWFDLTSWIKYIQ). A helical membrane pass occupies residues 698–718 (IYIIVGVILLRIVIYIVQMLA). Residues 719–882 (RLRQGYRPVF…IRQGLELTLL (164 aa)) lie on the Cytoplasmic side of the membrane. The YXXV motif; contains endocytosis signal motif lies at 724–727 (YRPV). Positions 738-761 (THTQQDPALPTKEGKKGDGGGSGG) are disordered. A lipid anchor (S-palmitoyl cysteine; by host) is attached at cysteine 790. Positions 881–882 (LL) match the Di-leucine internalization motif motif.

In terms of assembly, the mature envelope protein (Env) consists of a homotrimer of non-covalently associated gp120-gp41 heterodimers. The resulting complex protrudes from the virus surface as a spike. Interacts with host CD4 and CCR5. Gp120 also interacts with the C-type lectins CD209/DC-SIGN and CLEC4M/DC-SIGNR (collectively referred to as DC-SIGN(R)). As to quaternary structure, the mature envelope protein (Env) consists of a homotrimer of non-covalently associated gp120-gp41 heterodimers. The resulting complex protrudes from the virus surface as a spike. In terms of processing, specific enzymatic cleavages in vivo yield mature proteins. Envelope glycoproteins are synthesized as an inactive precursor that is heavily N-glycosylated and processed likely by host cell furin in the Golgi to yield the mature SU and TM proteins. The cleavage site between SU and TM requires the minimal sequence [KR]-X-[KR]-R. Post-translationally, palmitoylation of the transmembrane protein and of Env polyprotein (prior to its proteolytic cleavage) is essential for their association with host cell membrane lipid rafts. Palmitoylation is therefore required for envelope trafficking to classical lipid rafts, but not for viral replication.

It localises to the virion membrane. Its subcellular location is the host cell membrane. It is found in the host endosome membrane. The surface protein gp120 (SU) attaches the virus to the host lymphoid cell by binding to the primary receptor CD4. This interaction induces a structural rearrangement creating a high affinity binding site for a chemokine coreceptor like CCR5. This peculiar 2 stage receptor-interaction strategy allows gp120 to maintain the highly conserved coreceptor-binding site in a cryptic conformation, protected from neutralizing antibodies. These changes are transmitted to the transmembrane protein gp41 and are thought to activate its fusogenic potential by unmasking its fusion peptide. Its function is as follows. Surface protein gp120 (SU) may target the virus to gut-associated lymphoid tissue (GALT) by binding host ITGA4/ITGB7 (alpha-4/beta-7 integrins), a complex that mediates T-cell migration to the GALT. Interaction between gp120 and ITGA4/ITGB7 would allow the virus to enter GALT early in the infection, infecting and killing most of GALT's resting CD4+ T-cells. This T-cell depletion is believed to be the major insult to the host immune system leading to AIDS. In terms of biological role, the surface protein gp120 is a ligand for CD209/DC-SIGN and CLEC4M/DC-SIGNR, which are respectively found on dendritic cells (DCs), and on endothelial cells of liver sinusoids and lymph node sinuses. These interactions allow capture of viral particles at mucosal surfaces by these cells and subsequent transmission to permissive cells. DCs are professional antigen presenting cells, critical for host immunity by inducing specific immune responses against a broad variety of pathogens. They act as sentinels in various tissues where they take up antigen, process it, and present it to T-cells following migration to lymphoid organs. SIV subverts the migration properties of dendritic cells to gain access to CD4+ T-cells in lymph nodes. Virus transmission to permissive T-cells occurs either in trans (without DCs infection, through viral capture and transmission), or in cis (following DCs productive infection, through the usual CD4-gp120 interaction), thereby inducing a robust infection. In trans infection, bound virions remain infectious over days and it is proposed that they are not degraded, but protected in non-lysosomal acidic organelles within the DCs close to the cell membrane thus contributing to the viral infectious potential during DCs' migration from the periphery to the lymphoid tissues. On arrival at lymphoid tissues, intact virions recycle back to DCs' cell surface allowing virus transmission to CD4+ T-cells. Virion capture also seems to lead to MHC-II-restricted viral antigen presentation, and probably to the activation of SIV-specific CD4+ cells. Functionally, the transmembrane protein gp41 (TM) acts as a class I viral fusion protein. Under the current model, the protein has at least 3 conformational states: pre-fusion native state, pre-hairpin intermediate state, and post-fusion hairpin state. During fusion of viral and target intracellular membranes, the coiled coil regions (heptad repeats) assume a trimer-of-hairpins structure, positioning the fusion peptide in close proximity to the C-terminal region of the ectodomain. The formation of this structure appears to drive apposition and subsequent fusion of viral and target cell membranes. Complete fusion occurs in host cell endosomes. The virus undergoes clathrin-dependent internalization long before endosomal fusion, thus minimizing the surface exposure of conserved viral epitopes during fusion and reducing the efficacy of inhibitors targeting these epitopes. Membranes fusion leads to delivery of the nucleocapsid into the cytoplasm. The envelope glycoprotein gp160 precursor down-modulates cell surface CD4 antigen by interacting with it in the endoplasmic reticulum and blocking its transport to the cell surface. Its function is as follows. The gp120-gp41 heterodimer allows rapid transcytosis of the virus through CD4 negative cells such as simple epithelial monolayers of the intestinal, rectal and endocervical epithelial barriers. Both gp120 and gp41 specifically recognize glycosphingolipids galactosyl-ceramide (GalCer) or 3' sulfo-galactosyl-ceramide (GalS) present in the lipid rafts structures of epithelial cells. Binding to these alternative receptors allows the rapid transcytosis of the virus through the epithelial cells. This transcytotic vesicle-mediated transport of virions from the apical side to the basolateral side of the epithelial cells does not involve infection of the cells themselves. The polypeptide is Envelope glycoprotein gp160 (env) (Simian immunodeficiency virus (isolate Mm142-83) (SIV-mac)).